A 545-amino-acid chain; its full sequence is T-box transcription factor TBX4 (545 aa).

The T-box DNA-binding region spans 71–251 (LHEKELWKKF…NNPFAKGFRG (181 aa)). The tract at residues 479-509 (QSQVRERGPSASFPRERGLPQGCERKPPSPH) is disordered. Residues 482 to 505 (VRERGPSASFPRERGLPQGCERKP) are compositionally biased toward basic and acidic residues. Position 507 is a phosphoserine (Ser-507).

The protein localises to the nucleus. Its function is as follows. Transcriptional regulator that has an essential role in the organogenesis of lungs, pelvis, and hindlimbs. In Homo sapiens (Human), this protein is T-box transcription factor TBX4 (TBX4).